Reading from the N-terminus, the 258-residue chain is Imidazole glycerol phosphate synthase subunit HisF (258 aa).

Active-site residues include Asp11 and Asp130.

It belongs to the HisA/HisF family. In terms of assembly, heterodimer of HisH and HisF.

The protein resides in the cytoplasm. It carries out the reaction 5-[(5-phospho-1-deoxy-D-ribulos-1-ylimino)methylamino]-1-(5-phospho-beta-D-ribosyl)imidazole-4-carboxamide + L-glutamine = D-erythro-1-(imidazol-4-yl)glycerol 3-phosphate + 5-amino-1-(5-phospho-beta-D-ribosyl)imidazole-4-carboxamide + L-glutamate + H(+). Its pathway is amino-acid biosynthesis; L-histidine biosynthesis; L-histidine from 5-phospho-alpha-D-ribose 1-diphosphate: step 5/9. Functionally, IGPS catalyzes the conversion of PRFAR and glutamine to IGP, AICAR and glutamate. The HisF subunit catalyzes the cyclization activity that produces IGP and AICAR from PRFAR using the ammonia provided by the HisH subunit. In Rhodopseudomonas palustris (strain BisB18), this protein is Imidazole glycerol phosphate synthase subunit HisF.